The chain runs to 500 residues: L-arabinose isomerase (500 aa).

Mn(2+)-binding residues include glutamate 306, glutamate 333, histidine 350, and histidine 450.

The protein belongs to the arabinose isomerase family. In terms of assembly, homohexamer. Mn(2+) serves as cofactor.

The catalysed reaction is beta-L-arabinopyranose = L-ribulose. It functions in the pathway carbohydrate degradation; L-arabinose degradation via L-ribulose; D-xylulose 5-phosphate from L-arabinose (bacterial route): step 1/3. Catalyzes the conversion of L-arabinose to L-ribulose. The sequence is that of L-arabinose isomerase from Escherichia coli O157:H7.